The sequence spans 89 residues: Nucleoside triphosphatase I (89 aa).

Residues 42–89 (FLGLDKMHSLLLFHDTGVGKTITTTFIIKQLKNIYTNWSILLLVKKHL) form the Helicase ATP-binding domain. 55-62 (HDTGVGKT) contacts ATP.

The protein belongs to the helicase family. NPH I subfamily.

It catalyses the reaction a ribonucleoside 5'-triphosphate + H2O = a ribonucleoside 5'-diphosphate + phosphate + H(+). Serves two roles in transcription; it acts in concert with viral termination factor/capping enzyme to catalyze release of UUUUUNU-containing nascent RNA from the elongation complex, and it acts by itself as a polymerase elongation factor to facilitate readthrough of intrinsic pause sites. This Swinepox virus (strain Kasza) (SWPV) protein is Nucleoside triphosphatase I (NPH1).